A 232-amino-acid chain; its full sequence is uncharacterized protein (232 aa).

Positions 1–32 are cleaved as a signal peptide; sequence MTTSKIATAFKTATFALAAGAVALGLASPADA.

This is an uncharacterized protein from Mycobacterium bovis (strain ATCC BAA-935 / AF2122/97).